The following is a 244-amino-acid chain: 23S rRNA (guanosine-2'-O-)-methyltransferase RlmB (244 aa).

S-adenosyl-L-methionine is bound by residues Gly-196, Ile-216, and Leu-225.

This sequence belongs to the class IV-like SAM-binding methyltransferase superfamily. RNA methyltransferase TrmH family. RlmB subfamily. As to quaternary structure, homodimer.

The protein resides in the cytoplasm. The enzyme catalyses guanosine(2251) in 23S rRNA + S-adenosyl-L-methionine = 2'-O-methylguanosine(2251) in 23S rRNA + S-adenosyl-L-homocysteine + H(+). In terms of biological role, specifically methylates the ribose of guanosine 2251 in 23S rRNA. This chain is 23S rRNA (guanosine-2'-O-)-methyltransferase RlmB, found in Photorhabdus laumondii subsp. laumondii (strain DSM 15139 / CIP 105565 / TT01) (Photorhabdus luminescens subsp. laumondii).